Reading from the N-terminus, the 360-residue chain is Peptide chain release factor 1 (360 aa).

The residue at position 235 (glutamine 235) is an N5-methylglutamine. Residues 285 to 304 are disordered; sequence KRQQEEASTRRNLLGSGDRS.

Belongs to the prokaryotic/mitochondrial release factor family. Post-translationally, methylated by PrmC. Methylation increases the termination efficiency of RF1.

It is found in the cytoplasm. Functionally, peptide chain release factor 1 directs the termination of translation in response to the peptide chain termination codons UAG and UAA. The chain is Peptide chain release factor 1 from Edwardsiella ictaluri (strain 93-146).